The primary structure comprises 132 residues: Small ribosomal subunit protein uS8 (132 aa).

The protein belongs to the universal ribosomal protein uS8 family. As to quaternary structure, part of the 30S ribosomal subunit. Contacts proteins S5 and S12.

One of the primary rRNA binding proteins, it binds directly to 16S rRNA central domain where it helps coordinate assembly of the platform of the 30S subunit. This is Small ribosomal subunit protein uS8 from Corynebacterium jeikeium (strain K411).